Reading from the N-terminus, the 85-residue chain is Beta-insect depressant toxin Lqh-dprIT3h (85 aa).

An N-terminal signal peptide occupies residues 1–21 (MKLLLLLTISASMLIEGLVNA). Residues 22–82 (DGYIRGGDGC…EWDYETDTCG (61 aa)) enclose the LCN-type CS-alpha/beta domain. Intrachain disulfides connect Cys31/Cys81, Cys35/Cys56, Cys42/Cys63, and Cys46/Cys65. The residue at position 82 (Gly82) is a Glycine amide.

Belongs to the long (4 C-C) scorpion toxin superfamily. Sodium channel inhibitor family. Beta subfamily. In terms of tissue distribution, expressed by the venom gland.

The protein localises to the secreted. Its function is as follows. Depressant insect beta-toxins cause a transient contraction paralysis followed by a slow flaccid paralysis. They bind voltage-independently at site-4 of sodium channels (Nav) and block action potentials, primarily by depolarizing the axonal membrane and suppressing the sodium current. This depressant toxin is active only on insects. It is found in a relatively small amount in the venom. The protein is Beta-insect depressant toxin Lqh-dprIT3h of Leiurus hebraeus (Hebrew deathstalker scorpion).